The following is a 452-amino-acid chain: UPF0761 membrane protein Bpet3042 (452 aa).

6 helical membrane-spanning segments follow: residues 56–76, 114–134, 153–173, 195–215, 225–245, and 259–279; these read VLGI…FPVF, LTAI…MTID, ALVY…SLWA, AISF…FVVV, ALVG…AFAY, and AFAT…AVLF.

The protein belongs to the UPF0761 family.

It is found in the cell inner membrane. This Bordetella petrii (strain ATCC BAA-461 / DSM 12804 / CCUG 43448) protein is UPF0761 membrane protein Bpet3042.